Consider the following 118-residue polypeptide: Ribonuclease P protein component (118 aa).

The protein belongs to the RnpA family. Consists of a catalytic RNA component (M1 or rnpB) and a protein subunit.

The enzyme catalyses Endonucleolytic cleavage of RNA, removing 5'-extranucleotides from tRNA precursor.. Its function is as follows. RNaseP catalyzes the removal of the 5'-leader sequence from pre-tRNA to produce the mature 5'-terminus. It can also cleave other RNA substrates such as 4.5S RNA. The protein component plays an auxiliary but essential role in vivo by binding to the 5'-leader sequence and broadening the substrate specificity of the ribozyme. The chain is Ribonuclease P protein component from Shewanella frigidimarina (strain NCIMB 400).